A 366-amino-acid polypeptide reads, in one-letter code: MNLLETVEQDTMPTHYKQMTQAEMIARVTEIKAQLGENLFIPCHHYQKDEVVPFADAIGDSLQLAQIAAQNKKAKHIVFCGVHFMAETADMLTTSEQIVTLPDMRAGCSMADMADIHQLTNAWPKLQTLFGDTILPVTYINSTAAIKSFVGEHGGTTVTSSNATKIVSWALEQKERIFFLPDQHLGRNTAFELGIPLEHMAIWNPIKNELEYEGNLDDCKVILWKGYCSVHQHFTVKNIENIRKNNPKMRIIVHPECTHEVVSLADDSGSTKKIVTEINNAAPGTEWAVGTEANLVGRIIQENPDKKIVSLNPFMCPCMTMNRIDLPHLLWTLEAIQNGEQRNQIKVDKQTTKFALKALERMLQLS.

Iminosuccinate is bound by residues H44 and S61. C108 is a [4Fe-4S] cluster binding site. Residues 139 to 141 (YIN) and S160 each bind iminosuccinate. A [4Fe-4S] cluster-binding site is contributed by C228. Iminosuccinate-binding positions include 254–256 (HPE) and T271. C318 is a binding site for [4Fe-4S] cluster.

The protein belongs to the quinolinate synthase family. Type 3 subfamily. Requires [4Fe-4S] cluster as cofactor.

It is found in the cytoplasm. The enzyme catalyses iminosuccinate + dihydroxyacetone phosphate = quinolinate + phosphate + 2 H2O + H(+). The protein operates within cofactor biosynthesis; NAD(+) biosynthesis; quinolinate from iminoaspartate: step 1/1. Catalyzes the condensation of iminoaspartate with dihydroxyacetone phosphate to form quinolinate. This Listeria monocytogenes serotype 4b (strain F2365) protein is Quinolinate synthase.